Here is a 143-residue protein sequence, read N- to C-terminus: MDMLRSACFYFLLIVFVILSWSLLCDSRHLGHMEKKLSVNLDLLNKDNEEITKLEAPSTNKTNTLLSQSHAVVNHGDNGQINGKKTKEIHRVKRASDKKVSSKRVSRTWKIPKYPKKQPKSDQEHPGFNLDYMQPTTHPPHHN.

Residues 1 to 27 (MDMLRSACFYFLLIVFVILSWSLLCDS) form the signal peptide. Positions 28 to 130 (RHLGHMEKKL…SDQEHPGFNL (103 aa)) are excised as a propeptide. Residue Asn-60 is glycosylated (N-linked (GlcNAc...) asparagine). The segment covering 74 to 83 (NHGDNGQING) has biased composition (polar residues). The disordered stretch occupies residues 74–143 (NHGDNGQING…QPTTHPPHHN (70 aa)). Positions 92–99 (VKRASDKK) match the Nuclear localization signal motif. Residue Tyr-132 is modified to Sulfotyrosine. A Hydroxyproline modification is found at Pro-140.

The protein belongs to the RGF family. In terms of assembly, binds to LRR receptor-like serine/threonine-protein kinases RGI1, RGI2 and RGI3 to trigger their dimerization with SERK proteins and subsequent signaling. The tyrosine sulfation is critical for the function of the peptide. In terms of tissue distribution, expressed in root tips.

Its subcellular location is the secreted. It is found in the nucleus. Functionally, maintains the postembryonic root stem cell niche by regulating the expression levels and patterns of the transcription factor PLETHORA (PLT), mainly at the post-transcriptional level. Promotes root elongation. The protein is Root meristem growth factor 10 of Arabidopsis thaliana (Mouse-ear cress).